The chain runs to 205 residues: Outer-membrane lipoprotein carrier protein (205 aa).

Residues 1–19 (MKKIIICFIFVFSINVSFA) form the signal peptide.

It belongs to the LolA family. As to quaternary structure, monomer.

The protein localises to the periplasm. In terms of biological role, participates in the translocation of lipoproteins from the inner membrane to the outer membrane. Only forms a complex with a lipoprotein if the residue after the N-terminal Cys is not an aspartate (The Asp acts as a targeting signal to indicate that the lipoprotein should stay in the inner membrane). The polypeptide is Outer-membrane lipoprotein carrier protein (Francisella tularensis subsp. holarctica (strain LVS)).